We begin with the raw amino-acid sequence, 244 residues long: Cell division protein ZapD (244 aa).

This sequence belongs to the ZapD family. As to quaternary structure, interacts with FtsZ.

The protein resides in the cytoplasm. Cell division factor that enhances FtsZ-ring assembly. Directly interacts with FtsZ and promotes bundling of FtsZ protofilaments, with a reduction in FtsZ GTPase activity. The sequence is that of Cell division protein ZapD from Shewanella sp. (strain MR-7).